A 481-amino-acid chain; its full sequence is CASP8 and FADD-like apoptosis regulator (481 aa).

DED domains lie at 6-78 (VSAE…RILK) and 97-172 (DYRV…LNTK). The segment at 6–200 (VSAEVIHQVE…QASLPKLSIK (195 aa)) is interaction with CASP8. Positions 6 to 229 (VSAEVIHQVE…DSQRTLVKTS (224 aa)) are interaction with FADD. Positions 6-307 (VSAEVIHQVE…YASMAQHQDY (302 aa)) are interaction with CASP8 propeptide. The interaction with CASP3 stretch occupies residues 197–436 (LSIKYNSRLQ…KLSQQLKQGR (240 aa)). Residues 197–481 (LSIKYNSRLQ…LRKKLILAPT (285 aa)) form an interaction with TRAF1 and TRAF2 region. An interaction with CASP8 subunits p18 and p10 region spans residues 219–481 (RDSQRTLVKT…LRKKLILAPT (263 aa)). The interval 265-360 (DTKYLQETFT…RGKPKLFFIQ (96 aa)) is caspase. The interval 372 to 481 (SSLEVDGPSI…LRKKLILAPT (110 aa)) is interaction with CASP8.

This sequence belongs to the peptidase C14A family. As to quaternary structure, TNFRSF6 stimulation triggers recruitment to the death-inducing signaling complex (DISC) formed by TNFRSF6, FADD and CASP8. A proteolytic fragment (p43) stays associated with the DISC. Interacts with RIPK1. Post-translationally, proteolytically processed by CASP8 generating subunits p43 and p12. In terms of tissue distribution, highly expressed in heart.

Its function is as follows. Apoptosis regulator protein which may function as a crucial link between cell survival and cell death pathways in mammalian cells. Acts as an inhibitor of TNFRSF6 mediated apoptosis. A proteolytic fragment (p43) is likely retained in the death-inducing signaling complex (DISC) thereby blocking further recruitment and processing of caspase-8 at the complex. Full length and shorter isoforms have been shown either to induce apoptosis or to reduce TNFRSF-triggered apoptosis. Lacks enzymatic (caspase) activity. This is CASP8 and FADD-like apoptosis regulator (Cflar) from Mus musculus (Mouse).